A 156-amino-acid chain; its full sequence is 3-hydroxyacyl-[acyl-carrier-protein] dehydratase FabZ (156 aa).

Residue histidine 54 is part of the active site.

The protein belongs to the thioester dehydratase family. FabZ subfamily.

It is found in the cytoplasm. It carries out the reaction a (3R)-hydroxyacyl-[ACP] = a (2E)-enoyl-[ACP] + H2O. Involved in unsaturated fatty acids biosynthesis. Catalyzes the dehydration of short chain beta-hydroxyacyl-ACPs and long chain saturated and unsaturated beta-hydroxyacyl-ACPs. In Koribacter versatilis (strain Ellin345), this protein is 3-hydroxyacyl-[acyl-carrier-protein] dehydratase FabZ.